A 216-amino-acid chain; its full sequence is Small ribosomal subunit protein uS3 (216 aa).

Residues 24–93 enclose the KH type-2 domain; sequence IKEFLEYRLA…NPQIDVIDVS (70 aa).

It belongs to the universal ribosomal protein uS3 family. In terms of assembly, part of the 30S ribosomal subunit.

In terms of biological role, binds the lower part of the 30S subunit head. The chain is Small ribosomal subunit protein uS3 from Pyrobaculum calidifontis (strain DSM 21063 / JCM 11548 / VA1).